Reading from the N-terminus, the 214-residue chain is A-type ATP synthase subunit D (214 aa).

This sequence belongs to the V-ATPase D subunit family. As to quaternary structure, has multiple subunits with at least A(3), B(3), C, D, E, F, H, I and proteolipid K(x).

It localises to the cell membrane. Its function is as follows. Component of the A-type ATP synthase that produces ATP from ADP in the presence of a proton gradient across the membrane. This is A-type ATP synthase subunit D from Thermococcus sibiricus (strain DSM 12597 / MM 739).